The primary structure comprises 74 residues: MSEIPTVVTPTKDYKRLQAKLDEIENTVENTNAEIIQRTGKKAGRDVGIAYGLAIGFIFVYVLGTVLPLFDLIK.

A helical membrane pass occupies residues 47-67 (VGIAYGLAIGFIFVYVLGTVL).

The protein belongs to the MtrG family. In terms of assembly, the complex is composed of 8 subunits; MtrA, MtrB, MtrC, MtrD, MtrE, MtrF, MtrG and MtrH.

The protein resides in the cell membrane. It catalyses the reaction 5-methyl-5,6,7,8-tetrahydromethanopterin + coenzyme M + 2 Na(+)(in) = 5,6,7,8-tetrahydromethanopterin + methyl-coenzyme M + 2 Na(+)(out). It participates in one-carbon metabolism; methanogenesis from CO(2); methyl-coenzyme M from 5,10-methylene-5,6,7,8-tetrahydromethanopterin: step 2/2. In terms of biological role, part of a complex that catalyzes the formation of methyl-coenzyme M and tetrahydromethanopterin from coenzyme M and methyl-tetrahydromethanopterin. This is an energy-conserving, sodium-ion translocating step. This Methanococcus maripaludis (strain DSM 14266 / JCM 13030 / NBRC 101832 / S2 / LL) protein is Tetrahydromethanopterin S-methyltransferase subunit G.